A 551-amino-acid chain; its full sequence is Nucleobase-ascorbate transporter 3 (551 aa).

Residues 1–30 (MVETGHHHQHPPAPAAAGHPPVPSMAMARN) are disordered. Transmembrane regions (helical) follow at residues 56 to 76 (ETVV…VLIA), 92 to 111 (RVIQ…QTLI), 117 to 136 (TVMG…IRDY), 158 to 178 (SLII…WGNL), 179 to 199 (IRIF…LGLF), 202 to 222 (GFPL…LLII), 242 to 262 (ALLV…VSGA), 306 to 326 (VFGM…VFFA), 390 to 410 (FFMI…SIPL), 412 to 432 (IFAG…ISFI), 442 to 462 (NMYV…YFLA), and 481 to 501 (DILN…ATIL).

The protein belongs to the nucleobase:cation symporter-2 (NCS2) (TC 2.A.40) family. Expressed in the apical meristem 4 days after imbibition (DAI). Expressed in the major veins of rosette leaves and pedicels. Expressed in the root central cylinder, root meristems, root tips and lateral root primordia.

It is found in the membrane. In Arabidopsis thaliana (Mouse-ear cress), this protein is Nucleobase-ascorbate transporter 3 (NAT3).